Reading from the N-terminus, the 591-residue chain is Aspartate--tRNA(Asp/Asn) ligase (591 aa).

Glu176 serves as a coordination point for L-aspartate. The interval 200–203 (QLFK) is aspartate. Arg222 contributes to the L-aspartate binding site. ATP is bound by residues 222-224 (RDE) and Gln231. His450 contributes to the L-aspartate binding site. Position 484 (Glu484) interacts with ATP. Arg491 serves as a coordination point for L-aspartate. ATP is bound at residue 536–539 (GLDR).

The protein belongs to the class-II aminoacyl-tRNA synthetase family. Type 1 subfamily. As to quaternary structure, homodimer.

The protein localises to the cytoplasm. The catalysed reaction is tRNA(Asx) + L-aspartate + ATP = L-aspartyl-tRNA(Asx) + AMP + diphosphate. Functionally, aspartyl-tRNA synthetase with relaxed tRNA specificity since it is able to aspartylate not only its cognate tRNA(Asp) but also tRNA(Asn). Reaction proceeds in two steps: L-aspartate is first activated by ATP to form Asp-AMP and then transferred to the acceptor end of tRNA(Asp/Asn). The polypeptide is Aspartate--tRNA(Asp/Asn) ligase (Bacillus cereus (strain AH187)).